The chain runs to 128 residues: Histone H2A (128 aa).

This sequence belongs to the histone H2A family. As to quaternary structure, the nucleosome is a histone octamer containing two molecules each of H2A, H2B, H3 and H4 assembled in one H3-H4 heterotetramer and two H2A-H2B heterodimers. The octamer wraps approximately 147 bp of DNA.

It localises to the nucleus. The protein localises to the chromosome. Its function is as follows. Core component of nucleosome. Nucleosomes wrap and compact DNA into chromatin, limiting DNA accessibility to the cellular machineries which require DNA as a template. Histones thereby play a central role in transcription regulation, DNA repair, DNA replication and chromosomal stability. DNA accessibility is regulated via a complex set of post-translational modifications of histones, also called histone code, and nucleosome remodeling. In Encephalitozoon cuniculi (strain GB-M1) (Microsporidian parasite), this protein is Histone H2A (HTA1).